The primary structure comprises 462 residues: Retinoic acid receptor alpha (462 aa).

The segment at 1–87 is modulating; it reads MASNSSSCPT…PPPLPRIYKP (87 aa). Residues 52–64 show a composition bias toward polar residues; that stretch reads GYSTPSPATIETQ. Residues 52–77 are disordered; that stretch reads GYSTPSPATIETQSSSSEEIVPSPPS. Serine 77 carries the post-translational modification Phosphoserine; by CDK7. 2 consecutive NR C4-type zinc fingers follow at residues 88 to 108 and 124 to 148; these read CFVC…CEGC and CHRD…LQKC. Positions 88-153 form a DNA-binding region, nuclear receptor; the sequence is CFVCQDKSSG…RLQKCFEVGM (66 aa). Position 96 is a phosphoserine; by PKB/AKT1 (serine 96). The hinge stretch occupies residues 154 to 182; that stretch reads SKESVRNDRNKKKKEVPKPECSESYTLTP. Glycyl lysine isopeptide (Lys-Gly) (interchain with G-Cter in SUMO) cross-links involve residues lysine 166 and lysine 171. In terms of domain architecture, NR LBD spans 183 to 417; that stretch reads EVGELIEKVR…PLIQEMLENS (235 aa). Serine 219 is modified (phosphoserine; by PKA). Position 235 (cysteine 235) interacts with all-trans-retinoate. The UBR5-degron motif lies at 254-258; the sequence is IADQI. Serine 287 is an all-trans-retinoate binding site. Serine 369 carries the phosphoserine; by PKA modification. Lysine 399 is covalently cross-linked (Glycyl lysine isopeptide (Lys-Gly) (interchain with G-Cter in SUMO)). Positions 404–419 are required for binding corepressor NCOR1; sequence GSMPPLIQEMLENSEG. The 9aaTAD signature appears at 408–416; the sequence is PLIQEMLEN. A disordered region spans residues 419–462; the sequence is GLDTLSGQPGGGGRDGGGLAPPPGSCSPSLSPSSNRSSPATHSP. Residues 426–437 are compositionally biased toward gly residues; that stretch reads QPGGGGRDGGGL. A compositionally biased stretch (low complexity) spans 444 to 462; the sequence is CSPSLSPSSNRSSPATHSP.

Belongs to the nuclear hormone receptor family. NR1 subfamily. As to quaternary structure, heterodimer; with RXRA (via C-terminus); association with RXRA is enhanced by pulsatile shear stress. Binds DNA preferentially as a heterodimer. RXRA serves as enhancer to induce RARA binding to RARE. Interacts with RXRG. Interacts with coactivators NCOA3 and NCOA6. Interacts with NCOA7; the interaction requires ligand-binding. Interacts (via the ligand-binding domain) with PRAME; the interaction is ligand (retinoic acid)-dependent. Interacts with AKT1; the interaction phosphorylates RARA and represses transactivation. Interacts with PRKAR1A; the interaction negatively regulates RARA transcriptional activity. Interacts with NCOR1 and NCOR2. Interacts with PRMT2. Interacts with LRIF1. Interacts with ASXL1 and NCOA1. Interacts with ACTN4. In a complex with HDAC3, HDAC5 and HDAC7; the HDACs serve as corepressors of RARA, causing its deacetylation and inhibition of RARE DNA element binding; association with HDAC3, HDAC5 and HDAC7 is increased upon oscillatory shear stress. Interacts with CDK7. In the absence of hormonal ligand, interacts with TACC1. Phosphorylated on serine and threonine residues. Phosphorylation does not change during cell cycle. Phosphorylation on Ser-77 is crucial for transcriptional activity. Phosphorylation by AKT1 is required for the repressor activity but has no effect on DNA binding, protein stability nor subcellular localization. Phosphorylated by PKA in vitro. This phosphorylation on Ser-219 and Ser-369 is critical for ligand binding, nuclear localization and transcriptional activity in response to FSH signaling. In terms of processing, sumoylated with SUMO2, mainly on Lys-399 which is also required for SENP6 binding. On all-trans retinoic acid (ATRA) binding, a conformational change may occur that allows sumoylation on two additional site, Lys-166 and Lys-171. Probably desumoylated by SENP6. Sumoylation levels determine nuclear localization and regulate ATRA-mediated transcriptional activity. Post-translationally, trimethylation enhances heterodimerization with RXRA and positively modulates the transcriptional activation. Ubiquitinated by UBR5, leading to its degradation: UBR5 specifically recognizes and binds ligand-bound RARA when it is not associated with coactivators (NCOAs). In presence of NCOAs, the UBR5-degron is not accessible, preventing its ubiquitination and degradation. In terms of processing, acetylated; acetylation is increased upon pulsatile shear stress and decreased upon oscillatory shear stress. In terms of tissue distribution, expressed in monocytes.

It is found in the nucleus. The protein resides in the cytoplasm. Receptor for retinoic acid. Retinoic acid receptors bind as heterodimers to their target response elements in response to their ligands, all-trans or 9-cis retinoic acid, and regulate gene expression in various biological processes. The RXR/RAR heterodimers bind to the retinoic acid response elements (RARE) composed of tandem 5'-AGGTCA-3' sites known as DR1-DR5. In the absence of ligand, the RXR-RAR heterodimers associate with a multiprotein complex containing transcription corepressors that induce histone deacetylation, chromatin condensation and transcriptional suppression. On ligand binding, the corepressors dissociate from the receptors and associate with the coactivators leading to transcriptional activation. Formation of a complex with histone deacetylases might lead to inhibition of RARE DNA element binding and to transcriptional repression. Transcriptional activation and RARE DNA element binding might be supported by the transcription factor KLF2. RARA plays an essential role in the regulation of retinoic acid-induced germ cell development during spermatogenesis. Has a role in the survival of early spermatocytes at the beginning prophase of meiosis. In Sertoli cells, may promote the survival and development of early meiotic prophase spermatocytes. In concert with RARG, required for skeletal growth, matrix homeostasis and growth plate function. Together with RXRA, positively regulates microRNA-10a expression, thereby inhibiting the GATA6/VCAM1 signaling response to pulsatile shear stress in vascular endothelial cells. In association with HDAC3, HDAC5 and HDAC7 corepressors, plays a role in the repression of microRNA-10a and thereby promotes the inflammatory response. The chain is Retinoic acid receptor alpha (RARA) from Homo sapiens (Human).